A 37-amino-acid polypeptide reads, in one-letter code: Potassium channel toxin alpha-KTx 4.8 (37 aa).

2 cysteine pairs are disulfide-bonded: Cys-13–Cys-33 and Cys-17–Cys-35.

It belongs to the short scorpion toxin superfamily. Potassium channel inhibitor family. Alpha-KTx 04 subfamily. In terms of tissue distribution, expressed by the venom gland.

The protein localises to the secreted. Reversible blocker of voltage-gated potassium channel Kv1.2/KCNA2 (Kd=65 nM) and calcium-activated potassium channels KCa2.2/KCNN2 (Kd=575 nM) and KCa3.1/KCNN4 (Kd=59 nM). In Centruroides margaritatus (Central American bark Scorpion), this protein is Potassium channel toxin alpha-KTx 4.8.